A 288-amino-acid polypeptide reads, in one-letter code: Protoheme IX farnesyltransferase (288 aa).

The next 9 helical transmembrane spans lie at 8–28 (IIKP…FLLA), 35–55 (VNLF…ASIF), 75–95 (IAIG…LLIL), 105–125 (FLTI…YSLL), 130–150 (SVYS…IGYC), 161–181 (FILL…IGLV), 205–225 (INII…FFAG), 230–250 (NYLF…IKGF), and 265–285 (IFLF…IDYK).

The protein belongs to the UbiA prenyltransferase family. Protoheme IX farnesyltransferase subfamily.

It localises to the cell membrane. It carries out the reaction heme b + (2E,6E)-farnesyl diphosphate + H2O = Fe(II)-heme o + diphosphate. It participates in porphyrin-containing compound metabolism; heme O biosynthesis; heme O from protoheme: step 1/1. Functionally, converts heme B (protoheme IX) to heme O by substitution of the vinyl group on carbon 2 of heme B porphyrin ring with a hydroxyethyl farnesyl side group. The sequence is that of Protoheme IX farnesyltransferase from Wigglesworthia glossinidia brevipalpis.